Consider the following 937-residue polypeptide: Periplasmic nitrate reductase (937 aa).

The segment at residues 1–31 (MSMNRREFLKTTAAAAAASAVGISIPSEAKA) is a signal peptide (tat-type signal). Positions 40–96 (WQWDKAVCRFCGTGCGIMVAVKDDKIVAVKGDPESPVNRGINCIKGYFNAKIMYGAD) constitute a 4Fe-4S Mo/W bis-MGD-type domain. Positions 47, 50, 54, and 82 each coordinate [4Fe-4S] cluster. Mo-bis(molybdopterin guanine dinucleotide)-binding positions include Lys-84, Gln-152, Asn-177, Cys-181, 214-221 (WGANMAEM), Met-422, Gln-426, Asn-532, Lys-580, Asp-607, and 827-836 (TGRVLEHWHS). Substrate is bound at residue Trp-903. Mo-bis(molybdopterin guanine dinucleotide)-binding residues include Asn-911 and Lys-928.

The protein belongs to the prokaryotic molybdopterin-containing oxidoreductase family. NasA/NapA/NarB subfamily. Component of the periplasmic nitrate reductase NapAB complex composed of NapA and NapB. Requires [4Fe-4S] cluster as cofactor. It depends on Mo-bis(molybdopterin guanine dinucleotide) as a cofactor. Post-translationally, predicted to be exported by the Tat system. The position of the signal peptide cleavage has not been experimentally proven.

Its subcellular location is the periplasm. It catalyses the reaction 2 Fe(II)-[cytochrome] + nitrate + 2 H(+) = 2 Fe(III)-[cytochrome] + nitrite + H2O. Its function is as follows. Catalytic subunit of the periplasmic nitrate reductase complex NapAB. Receives electrons from NapB and catalyzes the reduction of nitrate to nitrite. The chain is Periplasmic nitrate reductase from Nautilia profundicola (strain ATCC BAA-1463 / DSM 18972 / AmH).